The chain runs to 121 residues: Flagellar protein FliT (121 aa).

The segment at 1 to 50 is required for homodimerization; sequence MNHAPHLYFAWQQLVEKSQLMLRLATEEQWDELIASEMAYVNAVQEIAHL. The segment at 60 to 98 is fliD binding; sequence MQEQLRPMLRLILDNESKVKQLLQIRMDELAKLVGQSSV.

Belongs to the FliT family. As to quaternary structure, homodimer. Interacts with FliD and FlhC.

The protein resides in the cytoplasm. It is found in the cytosol. Its function is as follows. Dual-function protein that regulates the transcription of class 2 flagellar operons and that also acts as an export chaperone for the filament-capping protein FliD. As a transcriptional regulator, acts as an anti-FlhDC factor; it directly binds FlhC, thus inhibiting the binding of the FlhC/FlhD complex to class 2 promoters, resulting in decreased expression of class 2 flagellar operons. As a chaperone, effects FliD transition to the membrane by preventing its premature polymerization, and by directing it to the export apparatus. This Escherichia coli (strain ATCC 8739 / DSM 1576 / NBRC 3972 / NCIMB 8545 / WDCM 00012 / Crooks) protein is Flagellar protein FliT.